The primary structure comprises 347 residues: Peroxidase C2 (347 aa).

An N-terminal signal peptide occupies residues 1–24 (MHSSSSLIKLGFLLLLLNVSLSHA). 4 disulfides stabilise this stretch: cysteine 35–cysteine 115, cysteine 68–cysteine 73, cysteine 121–cysteine 325, and cysteine 201–cysteine 233. The Proton acceptor role is filled by histidine 66. The Ca(2+) site is built by aspartate 67, valine 70, glycine 72, aspartate 74, and serine 76. Asparagine 81 is a glycosylation site (N-linked (GlcNAc...) asparagine). Proline 163 is a binding site for substrate. Heme b is bound at residue histidine 194. Threonine 195 provides a ligand contact to Ca(2+). Asparagine 210 and asparagine 238 each carry an N-linked (GlcNAc...) asparagine glycan. Positions 246, 249, and 254 each coordinate Ca(2+).

Belongs to the peroxidase family. Classical plant (class III) peroxidase subfamily. The cofactor is Ca(2+). Requires heme b as cofactor.

It is found in the secreted. The protein localises to the vacuole. The catalysed reaction is 2 a phenolic donor + H2O2 = 2 a phenolic radical donor + 2 H2O. Functionally, removal of H(2)O(2), oxidation of toxic reductants, biosynthesis and degradation of lignin, suberization, auxin catabolism, response to environmental stresses such as wounding, pathogen attack and oxidative stress. These functions might be dependent on each isozyme/isoform in each plant tissue. This chain is Peroxidase C2 (PRXC2), found in Armoracia rusticana (Horseradish).